Reading from the N-terminus, the 955-residue chain is Beta-agarase B (955 aa).

The protein belongs to the glycosyl hydrolase 50 family.

It catalyses the reaction Hydrolysis of (1-&gt;4)-beta-D-galactosidic linkages in agarose, giving the tetramer as the predominant product.. In terms of biological role, hydrolyzes agarose to yield predominantly neoagarotetraose and neoagarohexaose. The chain is Beta-agarase B (agaB) from Vibrio sp. (strain JT0107).